Here is a 171-residue protein sequence, read N- to C-terminus: S-ribosylhomocysteine lyase (171 aa).

Positions 54, 58, and 128 each coordinate Fe cation.

Belongs to the LuxS family. Homodimer. Fe cation is required as a cofactor.

It carries out the reaction S-(5-deoxy-D-ribos-5-yl)-L-homocysteine = (S)-4,5-dihydroxypentane-2,3-dione + L-homocysteine. Its function is as follows. Involved in the synthesis of autoinducer 2 (AI-2) which is secreted by bacteria and is used to communicate both the cell density and the metabolic potential of the environment. The regulation of gene expression in response to changes in cell density is called quorum sensing. Catalyzes the transformation of S-ribosylhomocysteine (RHC) to homocysteine (HC) and 4,5-dihydroxy-2,3-pentadione (DPD). This Salmonella arizonae (strain ATCC BAA-731 / CDC346-86 / RSK2980) protein is S-ribosylhomocysteine lyase.